Reading from the N-terminus, the 483-residue chain is MNKKIRVRYAPSPTGLLHIGNARTALFNYLFARHHGGDFIIRIEDTDRERHVEDGERSQLENLRWLGMDWDESPETHENYRQSERLPLYQKYIDQLLTEGKAYYSYKTPEELEADHAKQEAAGIAPHYINEYAGMSDDEKAAYIAERKAQNIEPVVRISVDEKAIYKWNDIVKGDIEFEGKNIGGDWVIQKRDGYPTYNFAVVVDDHDMQISHVIRGDDHIANTPKQLVVYDALGWEAPQFGHMTLIINSETGKKLSKRDTNTLQFIEDYRKKGYMSDAIFNFIALLGWNPGGEKEIFSREELIELFDEHRLSKSPAAFDQKKLDWLDNEYIKNADFAKVFELTKPFLVAANRFDERAEELVKLYQPQMKSADEIVELTDLFYGDFPELTDEAREMLAAETTPLALSTFRAKLAELPENDFTVENIFPLFKATQKETGVKGKMLWMPIRIAASGSMHGPELPETIALLGKEKVLAHLDAALNK.

The short motif at 11–21 (PSPTGLLHIGN) is the 'HIGH' region element. Positions 255–259 (KLSKR) match the 'KMSKS' region motif. Position 258 (lysine 258) interacts with ATP.

Belongs to the class-I aminoacyl-tRNA synthetase family. Glutamate--tRNA ligase type 1 subfamily. As to quaternary structure, monomer.

It localises to the cytoplasm. The catalysed reaction is tRNA(Glu) + L-glutamate + ATP = L-glutamyl-tRNA(Glu) + AMP + diphosphate. Its function is as follows. Catalyzes the attachment of glutamate to tRNA(Glu) in a two-step reaction: glutamate is first activated by ATP to form Glu-AMP and then transferred to the acceptor end of tRNA(Glu). This is Glutamate--tRNA ligase from Lactococcus lactis subsp. lactis (strain IL1403) (Streptococcus lactis).